A 254-amino-acid chain; its full sequence is 3-oxo-5-alpha-steroid 4-dehydrogenase 2 (254 aa).

4 helical membrane passes run valine 8–glycine 28, proline 72–phenylalanine 92, phenylalanine 146–threonine 166, and leucine 206–methionine 226.

This sequence belongs to the steroid 5-alpha reductase family. Expressed in high levels in the prostate and many other androgen-sensitive tissues.

The protein localises to the microsome membrane. Its subcellular location is the endoplasmic reticulum membrane. It carries out the reaction a 3-oxo-5alpha-steroid + NADP(+) = a 3-oxo-Delta(4)-steroid + NADPH + H(+). It catalyses the reaction 17beta-hydroxy-5alpha-androstan-3-one + NADP(+) = testosterone + NADPH + H(+). The catalysed reaction is 5alpha-pregnane-3,20-dione + NADP(+) = progesterone + NADPH + H(+). In terms of biological role, converts testosterone (T) into 5-alpha-dihydrotestosterone (DHT) and progesterone or corticosterone into their corresponding 5-alpha-3-oxosteroids. It plays a central role in sexual differentiation and androgen physiology. The chain is 3-oxo-5-alpha-steroid 4-dehydrogenase 2 (Srd5a2) from Rattus norvegicus (Rat).